The chain runs to 453 residues: Phenylalanine-4-hydroxylase (453 aa).

At alanine 2 the chain carries N-acetylalanine. Serine 16 is modified (phosphoserine; by PKA). The region spanning 36-114 is the ACT domain; sequence SLIFSLKEEV…TVHELSRDKE (79 aa). Fe cation-binding residues include histidine 285, histidine 290, and glutamate 330.

The protein belongs to the biopterin-dependent aromatic amino acid hydroxylase family. Homodimer and homotetramer. Requires Fe(2+) as cofactor. Post-translationally, phosphorylation at Ser-16 increases basal activity and facilitates activation by the substrate phenylalanine.

The catalysed reaction is (6R)-L-erythro-5,6,7,8-tetrahydrobiopterin + L-phenylalanine + O2 = (4aS,6R)-4a-hydroxy-L-erythro-5,6,7,8-tetrahydrobiopterin + L-tyrosine. It functions in the pathway amino-acid degradation; L-phenylalanine degradation; acetoacetate and fumarate from L-phenylalanine: step 1/6. N-terminal region of PAH is thought to contain allosteric binding sites for phenylalanine and to constitute an 'inhibitory' domain that regulates the activity of a catalytic domain in the C-terminal portion of the molecule. Catalyzes the hydroxylation of L-phenylalanine to L-tyrosine. The protein is Phenylalanine-4-hydroxylase (Pah) of Rattus norvegicus (Rat).